The sequence spans 319 residues: Cobalamin biosynthesis protein CbiB (319 aa).

Helical transmembrane passes span Val-56–Ala-76, Trp-82–Ala-102, Val-153–Ala-173, Val-204–Cys-224, and Leu-296–Ser-316.

It belongs to the CobD/CbiB family.

Its subcellular location is the cell membrane. The protein operates within cofactor biosynthesis; adenosylcobalamin biosynthesis. Converts cobyric acid to cobinamide by the addition of aminopropanol on the F carboxylic group. However, the true cosubstrate could be (R)-1-amino-2-propanol O-2-phosphate, leading to cobinamide phosphate. This chain is Cobalamin biosynthesis protein CbiB, found in Salmonella arizonae (strain ATCC BAA-731 / CDC346-86 / RSK2980).